We begin with the raw amino-acid sequence, 705 residues long: Pentatricopeptide repeat-containing protein At1g09410, mitochondrial (705 aa).

The N-terminal 11 residues, 1–11, are a transit peptide targeting the mitochondrion; it reads MKSQILLRRTY. PPR repeat units follow at residues 16 to 46, 47 to 77, 78 to 112, 113 to 139, 140 to 170, 171 to 205, 206 to 232, 233 to 267, 268 to 294, 295 to 329, 330 to 364, 365 to 395, 396 to 430, 432 to 462, and 468 to 498; these read PPPT…CDSK, SISS…MPDR, NIIS…NVVS, WTAL…MPEK, NKVS…IPDK, DNIA…SVIT, WTTM…MPEK, TEVS…PVIA, CNAM…MKER, NDAS…GVRP, TFPT…QFDV, DVYV…FPSK, DIIM…GSTK, NEVT…MESV, and ITAH…MTVE. The segment at 503 to 578 is type E motif; that stretch reads VWGSLLGACR…SPGCSWTEVE (76 aa). Positions 579 to 610 are type E(+) motif; that stretch reads NKVHAFTRGGINSHPEQESILKILDELDGLLR. The tract at residues 611-705 is type DYW motif; sequence EAGYNPDCSY…NGECSCKDYW (95 aa).

It belongs to the PPR family. PCMP-H subfamily.

Its subcellular location is the mitochondrion. The sequence is that of Pentatricopeptide repeat-containing protein At1g09410, mitochondrial (PCMP-H18) from Arabidopsis thaliana (Mouse-ear cress).